Consider the following 652-residue polypeptide: Putative glycine--tRNA ligase (652 aa).

Positions 119-145 (GDKEARGQNSNDQPEESDDKKKRKKKV) are disordered. E221 is a glycine binding site. ATP-binding positions include 253-255 (RNE) and 264-265 (RV). Position 272 (E272) interacts with glycine. ATP is bound at residue 380–381 (EC). 499–501 (EPS) is a binding site for glycine. R506 is an ATP binding site.

The protein belongs to the class-II aminoacyl-tRNA synthetase family. Homodimer.

It is found in the cytoplasm. It carries out the reaction tRNA(Gly) + glycine + ATP = glycyl-tRNA(Gly) + AMP + diphosphate. The catalysed reaction is 2 ATP + H(+) = P(1),P(4)-bis(5'-adenosyl) tetraphosphate + diphosphate. Catalyzes the ATP-dependent ligation of glycine to the 3'-end of its cognate tRNA, via the formation of an aminoacyl-adenylate intermediate (Gly-AMP). Also produces diadenosine tetraphosphate (Ap4A), a universal pleiotropic signaling molecule needed for cell regulation pathways, by direct condensation of 2 ATPs. Thereby, may play a special role in Ap4A homeostasis. This Schizosaccharomyces pombe (strain 972 / ATCC 24843) (Fission yeast) protein is Putative glycine--tRNA ligase (grs1).